The primary structure comprises 194 residues: Heme transporter hrg-1 (194 aa).

The next 4 helical transmembrane spans lie at 45–65 (QIWI…VFAI), 71–91 (IAVT…HLHL), 113–133 (GATV…VAGI), and 143–163 (LMGA…KWSA). Residues 182–183 (LL) carry the Di-leucine motif motif.

The protein belongs to the HRG family. Specifically expressed in the intestinal cells in larvae and adults.

It is found in the endosome membrane. Its subcellular location is the lysosome membrane. In terms of biological role, heme transporter that regulates intracellular heme availability through the endosomal or lysosomal compartment. The sequence is that of Heme transporter hrg-1 (hrg-1) from Caenorhabditis elegans.